The chain runs to 253 residues: 5'-nucleotidase SurE (253 aa).

Positions 8, 9, 39, and 92 each coordinate a divalent metal cation.

The protein belongs to the SurE nucleotidase family. The cofactor is a divalent metal cation.

The protein resides in the cytoplasm. It carries out the reaction a ribonucleoside 5'-phosphate + H2O = a ribonucleoside + phosphate. Nucleotidase that shows phosphatase activity on nucleoside 5'-monophosphates. This chain is 5'-nucleotidase SurE, found in Burkholderia mallei (strain NCTC 10247).